We begin with the raw amino-acid sequence, 98 residues long: Putative protein adenylyltransferase MJ1217 (98 aa).

The GSX(10)DXD motif motif lies at 31 to 45 (GSYAREEQKETSDID). Positions 43, 45, and 75 each coordinate Mg(2+).

It belongs to the MntA antitoxin family. In terms of assembly, probably forms a complex with cognate toxin MJ1216. Requires Mg(2+) as cofactor.

It carries out the reaction L-tyrosyl-[protein] + ATP = O-(5'-adenylyl)-L-tyrosyl-[protein] + diphosphate. It catalyses the reaction O-(5'-adenylyl)-L-tyrosyl-[protein] + ATP = O-[5'-(adenylyl-(5'-&gt;3')-adenylyl)]-L-tyrosyl-[protein] + diphosphate. Probable antitoxin component of a putative type VII toxin-antitoxin (TA) system. Neutralizes cognate toxic MJ1216 by di-AMPylation. This chain is Putative protein adenylyltransferase MJ1217, found in Methanocaldococcus jannaschii (strain ATCC 43067 / DSM 2661 / JAL-1 / JCM 10045 / NBRC 100440) (Methanococcus jannaschii).